The sequence spans 134 residues: Phosphoribosyl-AMP cyclohydrolase (134 aa).

Asp-80 lines the Mg(2+) pocket. Cys-81 is a Zn(2+) binding site. Residues Asp-82 and Asp-84 each contribute to the Mg(2+) site. Residues Cys-98 and Cys-105 each contribute to the Zn(2+) site.

The protein belongs to the PRA-CH family. Homodimer. It depends on Mg(2+) as a cofactor. The cofactor is Zn(2+).

It is found in the cytoplasm. The catalysed reaction is 1-(5-phospho-beta-D-ribosyl)-5'-AMP + H2O = 1-(5-phospho-beta-D-ribosyl)-5-[(5-phospho-beta-D-ribosylamino)methylideneamino]imidazole-4-carboxamide. Its pathway is amino-acid biosynthesis; L-histidine biosynthesis; L-histidine from 5-phospho-alpha-D-ribose 1-diphosphate: step 3/9. Its function is as follows. Catalyzes the hydrolysis of the adenine ring of phosphoribosyl-AMP. The polypeptide is Phosphoribosyl-AMP cyclohydrolase (Bordetella avium (strain 197N)).